A 98-amino-acid polypeptide reads, in one-letter code: Defensin-A (98 aa).

The first 18 residues, 1-18, serve as a signal peptide directing secretion; that stretch reads MKSITVICFLALCTVAIT. The propeptide occupies 19-58; it reads SAYPQEPVLADEARPFANSLFDELPEETYQAAVENFRLKR. Cystine bridges form between Cys-61-Cys-88, Cys-74-Cys-94, and Cys-78-Cys-96.

This sequence belongs to the invertebrate defensin family. Type 1 subfamily.

It is found in the secreted. Functionally, antibacterial peptide mostly active against Gram-positive bacteria. Has activity against the bacteria Gram-negative E.cloacae beta12. This Aedes aegypti (Yellowfever mosquito) protein is Defensin-A (DEFA).